The sequence spans 192 residues: Imidazole glycerol phosphate synthase subunit HisH (192 aa).

One can recognise a Glutamine amidotransferase type-1 domain in the interval 1 to 192 (MIVIVDYGLG…QAIQGGFIND (192 aa)). The active-site Nucleophile is cysteine 77. Active-site residues include histidine 169 and glutamate 171.

As to quaternary structure, heterodimer of HisH and HisF.

The protein localises to the cytoplasm. The enzyme catalyses 5-[(5-phospho-1-deoxy-D-ribulos-1-ylimino)methylamino]-1-(5-phospho-beta-D-ribosyl)imidazole-4-carboxamide + L-glutamine = D-erythro-1-(imidazol-4-yl)glycerol 3-phosphate + 5-amino-1-(5-phospho-beta-D-ribosyl)imidazole-4-carboxamide + L-glutamate + H(+). The catalysed reaction is L-glutamine + H2O = L-glutamate + NH4(+). The protein operates within amino-acid biosynthesis; L-histidine biosynthesis; L-histidine from 5-phospho-alpha-D-ribose 1-diphosphate: step 5/9. Its function is as follows. IGPS catalyzes the conversion of PRFAR and glutamine to IGP, AICAR and glutamate. The HisH subunit catalyzes the hydrolysis of glutamine to glutamate and ammonia as part of the synthesis of IGP and AICAR. The resulting ammonia molecule is channeled to the active site of HisF. The chain is Imidazole glycerol phosphate synthase subunit HisH from Staphylococcus aureus (strain bovine RF122 / ET3-1).